Reading from the N-terminus, the 208-residue chain is Histone H1t (208 aa).

A compositionally biased stretch (low complexity) spans 1 to 16 (MSETVPAASAGAVPAV). Residues 1–40 (MSETVPAASAGAVPAVMEKPLTKKRGKKPAGLTSASRKAP) form a disordered region. Ser9 is modified (phosphoserine). The H15 domain maps to 40 to 113 (PNLSVSKLIT…GASGSFKLSK (74 aa)). Position 58 is a citrulline (Arg58). Residues 102-208 (GTGASGSFKL…ANIRKATSRK (107 aa)) form a disordered region. A compositionally biased stretch (basic residues) spans 111-136 (LSKKVLPKSTRRKANKSASAKTKKLV). Ser143 bears the Phosphoserine mark. Residues 148–157 (KTNKRAKKPR) are compositionally biased toward basic residues. At Thr159 the chain carries Phosphothreonine. Positions 163-175 (KAVRSGRKAKGAK) are enriched in basic residues. A phosphoserine mark is found at Ser167 and Ser182. Residues 187 to 208 (RATKPKLTQHHKANIRKATSRK) are compositionally biased toward basic residues.

It belongs to the histone H1/H5 family. Phosphorylated in early spermatids. In terms of processing, citrullination at Arg-58 (H1R54ci) by PADI4 takes place within the DNA-binding site of H1 and results in its displacement from chromatin and global chromatin decondensation, thereby promoting pluripotency and stem cell maintenance.

Its function is as follows. Testis-specific histone H1 that forms less compacted chromatin compared to other H1 histone subtypes. Formation of more relaxed chromatin may be required to promote chromatin architecture required for proper chromosome regulation during meiosis, such as homologous recombination. Histones H1 act as linkers that bind to nucleosomes and compact polynucleosomes into a higher-order chromatin configuration. The polypeptide is Histone H1t (Macaca mulatta (Rhesus macaque)).